A 476-amino-acid chain; its full sequence is Flavin-dependent halogenase otaD (476 aa).

The FAD site is built by Gly-14 and Gly-17. Ser-304 and Gly-305 together coordinate chloride. Val-306 provides a ligand contact to FAD.

The protein belongs to the flavin-dependent halogenase family.

The enzyme catalyses ochratoxin B + FADH2 + chloride + O2 = ochratoxin A + FAD + 2 H2O. It participates in mycotoxin biosynthesis. In terms of biological role, flavin-dependent halogenase; part of the gene cluster that mediates the biosynthesis of ochratoxin A (OTA), a mycotoxin composed of a chlorinated type I polyketide dihydroisocoumarin moiety linked to L-phenylalanine, and demonstrated to have nephrotoxic, immunotoxic, genotoxic, neurotoxic, and teratogenic properties. OtaD chlorinates ochratoxin B (OTB) at the C-5 position to form OTA. The pathway begins with the highly reducing polyketide synthase otaA that catalyzes the formation of the isocoumarin group during the initial stages of biosynthesis, starting from one acetate and 4 malonate units, to originate the characteristic pentaketide skeleton 7-methylmellein (7-MM) of the OTA molecule. The newly identified cyclase otaY might be involved in the polyketide cyclization reaction during the initial steps of the OTA biosynthesis. 7-MM is then oxidized into 7-carboxymellein (also called ochratoxin beta) by the cytochrome P450 monooxygenase otaC. The NRPS encoded by the otaB gene is involved in the linking of phenylalanine to the dihydroisocoumarin ring. The reaction catalyzed by NRPS results in the production of ochratoxin B (OTB), which is the non-chlorinated analog of OTA and which subsequently serves as the substrate of the halogenase otaD for chlorination activity to form the final molecular structure of OTA, containing a chlorine atom in the C-5 position of the molecule. In Aspergillus niger (strain ATCC MYA-4892 / CBS 513.88 / FGSC A1513), this protein is Flavin-dependent halogenase otaD.